The chain runs to 1033 residues: SIT4-associating protein SAP190 (1033 aa).

Disordered stretches follow at residues 32 to 82 (DQDD…TTES), 147 to 213 (PEII…QVET), 768 to 813 (FGND…HDSG), and 828 to 1033 (ENEE…KEAF). A compositionally biased stretch (basic and acidic residues) spans 158–170 (ILIERDRKDKKED). Acidic residues predominate over residues 171 to 182 (AEEGGDSEETTN). Over residues 183-195 (DSDHDSGDERSVD) the composition is skewed to basic and acidic residues. Ser-774 bears the Phosphoserine mark. Acidic residues-rich tracts occupy residues 784-793 (SEDIIGDTEG) and 828-838 (ENEEDYAEYSD). 3 positions are modified to phosphoserine: Ser-857, Ser-862, and Ser-892. Over residues 858 to 879 (DDGKSKSAESEFTDKISEHRDG) the composition is skewed to basic and acidic residues. Over residues 909-924 (SRSQPSDPKLQDQNIF) the composition is skewed to polar residues. Residues 932-944 (GVGDDDDYMDPND) are compositionally biased toward acidic residues. Position 990 is a phosphothreonine (Thr-990). Phosphoserine is present on Ser-991. A compositionally biased stretch (acidic residues) spans 1000 to 1018 (ISSDEEDSEDEDEENDMGN).

This sequence belongs to the SAPS family. Associates with the SIT4 protein phosphatase catalytic subunit in a cell-cycle-dependent manner. Post-translationally, hyperphosphorylated in the absence of SIT4.

Its subcellular location is the cytoplasm. In terms of biological role, positive regulator of protein phosphatase SIT4. Involved in the general amino acid control (GAAC) response regulated by TOR. Involved in the dephosphorylation of the elongator complex subunit IKI3. This chain is SIT4-associating protein SAP190 (SAP190), found in Saccharomyces cerevisiae (strain Lalvin EC1118 / Prise de mousse) (Baker's yeast).